A 470-amino-acid chain; its full sequence is Aminoacyl transferase sphA (470 aa).

3 residues coordinate pyridoxal 5'-phosphate: Ser-212, His-244, and Thr-272. Lys-275 is subject to N6-(pyridoxal phosphate)lysine.

The protein belongs to the class-II pyridoxal-phosphate-dependent aminotransferase family. BioF subfamily. Homodimer. Pyridoxal 5'-phosphate serves as cofactor.

The catalysed reaction is aminomalonate + (3R)-hydroxyoctadeca-4,10-dienoyl-[ACP] = 3-oxopresphingofungin + holo-[ACP] + CO2. Its pathway is secondary metabolite biosynthesis. In terms of biological role, aminoacyl transferase; part of the gene cluster that mediates the biosynthesis of sphingofungins, bioactive molecules acting as sphingolipid inhibitors via inhibiting serine palmitoyl transferase (SPT). Within the pathway, sphA transfers aminomalonate onto the sphB product 3-hydroxyoctadeca-4,10-dienoyl-ACP to produce 3-keto-presphingofungin. The substrate specificity of sphA using only aminomalonate in Aspergillus fumigatus is responsible for the biosynthesis of sphingofungins B and C but not E and F like in Byssochlamys spectabilis. The PKS sphB does not contain any putative thioesterase domain for releasing the nascent polyketide chain and it has been suggested that aminoacyl transferases can facilitate the polyketide chain release. Sphingofungin biosynthesis starts with the PKS sphB that produces an C18 polyketide precursor 3-hydroxyoctadeca-4,10-dienoyl-ACP containing one delta-6 desaturation and one delta-12 desaturation. The aminoacyl transferase sphA uses the sphB product to produce 3-keto-presphingofungin by adding an aminomalonate molecule. SphF then reduces the C-3 ketone of 3-keto-presphingofungin which leads to presphingofungin. The cytochrome P450 monooxygenase sphH converts presphingofungin into sphingofungin B1 which is further converted to sphingofungin B by the dioxygenase sphC. SphC is also able to convert presphingofungin into sphingofungin B2. The acetyltransferase sphE acetylates sphingofungin B to produce sphingofungin C, but can also convert sphingofungin B1 into sphingofungin C1 and sphingofungin B2 into sphingofungin C2. Finally, sphingofungin C can be spontaneously converted into sphingofungin D. This Aspergillus fumigatus (strain CBS 144.89 / FGSC A1163 / CEA10) (Neosartorya fumigata) protein is Aminoacyl transferase sphA.